The chain runs to 418 residues: Hepatic and glial cell adhesion molecule (418 aa).

Residues 1-33 (MKRERGALSRASRALRLSPFVYLLLIQPVPLEG) form the signal peptide. One can recognise an Ig-like V-type domain in the interval 34-142 (VNITSPVRLI…GEKTINLTVD (109 aa)). Over 34-240 (VNITSPVRLI…VKITVYRRSS (207 aa)) the chain is Extracellular. 4 N-linked (GlcNAc...) asparagine glycosylation sites follow: N35, N138, N167, and N189. Positions 148–234 (PQVLVASTTV…QVRSLPVKIT (87 aa)) constitute an Ig-like C2-type domain. A disulfide bridge connects residues C168 and C217. The chain crosses the membrane as a helical span at residues 241-261 (LYIILSTGGIFLLVTLVTVCA). Residues 262-418 (CWKPSKKSRK…DESGQVEISA (157 aa)) lie on the Cytoplasmic side of the membrane. The interval 271–418 (KKRKLEKQNS…DESGQVEISA (148 aa)) is disordered. S280 bears the Phosphoserine mark. Positions 287 to 308 (NDDRLKSEADTLPRSGEQERKN) are enriched in basic and acidic residues. S321, S352, and S379 each carry phosphoserine. Residues 341 to 358 (GYSVSPPVPGRSPGLPIR) show a composition bias toward low complexity. The segment covering 385–396 (SSPGRSRSSSRS) has biased composition (low complexity).

Homodimer. Dimer formation occurs predominantly through cis interactions on the cell surface. Part of a complex containing MLC1, TRPV4, AQP4 and ATP1B1. Interacts with CLCN2. In terms of processing, N-glycosylated.

The protein localises to the cytoplasm. It localises to the cell membrane. In terms of biological role, involved in regulating cell motility and cell-matrix interactions. May inhibit cell growth through suppression of cell proliferation. In glia, associates and targets CLCN2 at astrocytic processes and myelinated fiber tracts where it may regulate transcellular chloride flux involved in neuron excitability. This chain is Hepatic and glial cell adhesion molecule, found in Mus musculus (Mouse).